The following is a 423-amino-acid chain: Serine hydroxymethyltransferase 2 (423 aa).

(6S)-5,6,7,8-tetrahydrofolate contacts are provided by residues Leu121 and 125–127 (GHL). Position 230 is an N6-(pyridoxal phosphate)lysine (Lys230). 356 to 358 (SPF) contributes to the (6S)-5,6,7,8-tetrahydrofolate binding site.

This sequence belongs to the SHMT family. As to quaternary structure, homodimer. Requires pyridoxal 5'-phosphate as cofactor.

It is found in the cytoplasm. It catalyses the reaction (6R)-5,10-methylene-5,6,7,8-tetrahydrofolate + glycine + H2O = (6S)-5,6,7,8-tetrahydrofolate + L-serine. It participates in one-carbon metabolism; tetrahydrofolate interconversion. The protein operates within amino-acid biosynthesis; glycine biosynthesis; glycine from L-serine: step 1/1. In terms of biological role, catalyzes the reversible interconversion of serine and glycine with tetrahydrofolate (THF) serving as the one-carbon carrier. This reaction serves as the major source of one-carbon groups required for the biosynthesis of purines, thymidylate, methionine, and other important biomolecules. Also exhibits THF-independent aldolase activity toward beta-hydroxyamino acids, producing glycine and aldehydes, via a retro-aldol mechanism. This is Serine hydroxymethyltransferase 2 from Pectobacterium atrosepticum (strain SCRI 1043 / ATCC BAA-672) (Erwinia carotovora subsp. atroseptica).